Consider the following 638-residue polypeptide: MPVITLPDGSTRHYEQSLSVLDVALDIHPRLAKSCIAGRFNDQLIDACDLLSVDGKLQIITPSDGEAVEIIRHSCAHLLGHAVKQLWPETKMAIGPVIENGFYYDLDIESPLTQEDLELLEKRMHELAHKNYTVIKKKVSWQKARDTFSKRGESYKIAILDENIDSSDQPNLYFHEEYIDMCRGPHVPNMSFCHYFKLQKTSGAYWRGDSKNKTLQRVYGTAWSDKKQLDAYLNRLEEATKRDHRKIGKTQDLYHFQEEAPGMVFWHENGWIVFRELEILIREKLKEYEYQEVKGPFMMDRVLWEKTGHWENYSENMFTTLSENREYCIKPMNCPGHLEIFKQGLKSYRDLPLRMAEFGSCHRNEPSGALHGLMRVRGFTQDDAHIFCTEKQVRKEVSNCIKMTYDIYQTFGFKKIAVKLSTRPEKRIGSDEIWTQAEEDLASVLKEQGITFELQPGEGAFYGPKIEFTLYDCLDRAWQCGTVQLDFSLPVRLNAFYIDENSERQVPVMIHRAILGSIERFIGILTEEYAGFFPVWLAPVQVMLINITEKQSDYVKKVAKNLQQLGVRAKVDLRNEKIGFKIRQHTLYRIPYILVCGDKEVESNQIAVRTHSGKDLGSFSVNVFADKLLEEISSRCLH.

Residues 1–61 enclose the TGS domain; sequence MPVITLPDGS…SVDGKLQIIT (61 aa). The tract at residues 243–534 is catalytic; that stretch reads DHRKIGKTQD…LTEEYAGFFP (292 aa). Positions 334, 385, and 511 each coordinate Zn(2+).

The protein belongs to the class-II aminoacyl-tRNA synthetase family. Homodimer. The cofactor is Zn(2+).

The protein resides in the cytoplasm. It carries out the reaction tRNA(Thr) + L-threonine + ATP = L-threonyl-tRNA(Thr) + AMP + diphosphate + H(+). Functionally, catalyzes the attachment of threonine to tRNA(Thr) in a two-step reaction: L-threonine is first activated by ATP to form Thr-AMP and then transferred to the acceptor end of tRNA(Thr). Also edits incorrectly charged L-seryl-tRNA(Thr). The chain is Threonine--tRNA ligase from Hamiltonella defensa subsp. Acyrthosiphon pisum (strain 5AT).